Reading from the N-terminus, the 131-residue chain is Arsenate reductase 2 (131 aa).

Active-site nucleophile residues include C10, C82, and C89. Cystine bridges form between C10–C82 and C82–C89.

The protein belongs to the low molecular weight phosphotyrosine protein phosphatase family. Thioredoxin-coupled ArsC subfamily.

The protein localises to the cytoplasm. It catalyses the reaction arsenate + [thioredoxin]-dithiol + H(+) = arsenite + [thioredoxin]-disulfide + H2O. Catalyzes the reduction of arsenate [As(V)] to arsenite [As(III)]. The chain is Arsenate reductase 2 from Staphylococcus haemolyticus (strain JCSC1435).